The sequence spans 272 residues: Large ribosomal subunit protein uL4 (272 aa).

The protein belongs to the universal ribosomal protein uL4 family. Part of the 50S ribosomal subunit.

In terms of biological role, one of the primary rRNA binding proteins, this protein initially binds near the 5'-end of the 23S rRNA. It is important during the early stages of 50S assembly. It makes multiple contacts with different domains of the 23S rRNA in the assembled 50S subunit and ribosome. Its function is as follows. Forms part of the polypeptide exit tunnel. This chain is Large ribosomal subunit protein uL4, found in Aeropyrum pernix (strain ATCC 700893 / DSM 11879 / JCM 9820 / NBRC 100138 / K1).